A 567-amino-acid polypeptide reads, in one-letter code: Dihydroxy-acid dehydratase (567 aa).

C57 contributes to the [2Fe-2S] cluster binding site. D89 lines the Mg(2+) pocket. A [2Fe-2S] cluster-binding site is contributed by C130. Residues D131 and K132 each coordinate Mg(2+). At K132 the chain carries N6-carboxylysine. C202 is a [2Fe-2S] cluster binding site. E453 lines the Mg(2+) pocket. The active-site Proton acceptor is the S479.

It belongs to the IlvD/Edd family. Homodimer. The cofactor is [2Fe-2S] cluster. Requires Mg(2+) as cofactor.

The catalysed reaction is (2R)-2,3-dihydroxy-3-methylbutanoate = 3-methyl-2-oxobutanoate + H2O. It catalyses the reaction (2R,3R)-2,3-dihydroxy-3-methylpentanoate = (S)-3-methyl-2-oxopentanoate + H2O. Its pathway is amino-acid biosynthesis; L-isoleucine biosynthesis; L-isoleucine from 2-oxobutanoate: step 3/4. It participates in amino-acid biosynthesis; L-valine biosynthesis; L-valine from pyruvate: step 3/4. Its function is as follows. Functions in the biosynthesis of branched-chain amino acids. Catalyzes the dehydration of (2R,3R)-2,3-dihydroxy-3-methylpentanoate (2,3-dihydroxy-3-methylvalerate) into 2-oxo-3-methylpentanoate (2-oxo-3-methylvalerate) and of (2R)-2,3-dihydroxy-3-methylbutanoate (2,3-dihydroxyisovalerate) into 2-oxo-3-methylbutanoate (2-oxoisovalerate), the penultimate precursor to L-isoleucine and L-valine, respectively. In Nocardioides sp. (strain ATCC BAA-499 / JS614), this protein is Dihydroxy-acid dehydratase.